A 147-amino-acid polypeptide reads, in one-letter code: Hemoglobin subunit gamma-1 (147 aa).

At Gly-2 the chain carries N-acetylglycine; in form Hb F1. Residues 3–147 (HFTEEDKATI…VASALSSRYH (145 aa)) enclose the Globin domain. At Thr-13 the chain carries Phosphothreonine. 3 positions are modified to phosphoserine: Ser-45, Ser-51, and Ser-53. Lys-60 carries the N6-acetyllysine modification. His-64 contributes to the heme b binding site. N6-acetyllysine is present on Lys-83. His-93 is a binding site for heme b. S-nitrosocysteine is present on Cys-94. Residue Ser-140 is modified to Phosphoserine.

Belongs to the globin family. Heterotetramer of two alpha chains and two gamma chains in fetal hemoglobin (Hb F). In the case of deletions affecting one or more of the alpha chains, the excess gamma chains form homotetramers that exhibit neither Bohr effect nor heme-heme cooperativity (hemoglobin Bart's). Acetylation of Gly-2 converts Hb F to the minor Hb F1. As to expression, red blood cells.

In terms of biological role, gamma chains make up the fetal hemoglobin F, in combination with alpha chains. The protein is Hemoglobin subunit gamma-1 (HBG1) of Homo sapiens (Human).